Here is a 219-residue protein sequence, read N- to C-terminus: N-(5'-phosphoribosyl)anthranilate isomerase (219 aa).

Belongs to the TrpF family.

The catalysed reaction is N-(5-phospho-beta-D-ribosyl)anthranilate = 1-(2-carboxyphenylamino)-1-deoxy-D-ribulose 5-phosphate. The protein operates within amino-acid biosynthesis; L-tryptophan biosynthesis; L-tryptophan from chorismate: step 3/5. The polypeptide is N-(5'-phosphoribosyl)anthranilate isomerase (Bradyrhizobium sp. (strain ORS 278)).